An 81-amino-acid polypeptide reads, in one-letter code: GAMMA-ctenitoxin-Pn1a (81 aa).

Residues 1 to 16 (MKVAIVFLSLLVLAFA) form the signal peptide. Positions 17–34 (SESIEENREEFPVEESAR) are excised as a propeptide. Disulfide bonds link Cys35/Cys49, Cys42/Cys55, Cys46/Cys81, Cys48/Cys65, and Cys57/Cys63.

It belongs to the neurotoxin 03 (Tx2) family. 05 subfamily. Expressed by the venom gland.

The protein resides in the secreted. Functionally, this insecticidal neurotoxin targets two types of channels/receptors. It reversibly inhibits the N-methyl-D-aspartate (NMDA)-subtype of ionotropic glutamate receptor (GRIN). It inhibits glutamate uptake from rat brain synaptosomes, and blocks GRIN in hippocampal slices. It also acts on sodium channels of both insects and mammals. On sodium channel insects, it strongly slows down channel inactivation (EC(50)=212.5 nM) and causes an increase (105%) in peak amplitude (at 1 uM) of B.germanica sodium channel (Nav), whereas it inhibits all mammalien sodium channels tested with the following order of potency: Nav1.3/SCN3A (IC(50)=1.5 uM) &gt; Nav1.6/SCN8A &gt; Nav1.5/SCN5A &gt; Nav1.4/SCN4A &gt;= Nav1.2/SCN2A. In vivo, it is highly toxic to house fly (Musca domestica), cockroach (Periplaneta americana), and cricket (Acheta domesticus). In different rat pain models (induced by PGE2, carrageenan or glutamate), it shows antinociceptive effect that may be related to an inhibitory activity on the glutamatergic system. The chain is GAMMA-ctenitoxin-Pn1a from Phoneutria nigriventer (Brazilian armed spider).